A 49-amino-acid chain; its full sequence is Large ribosomal subunit protein eL40 (49 aa).

This sequence belongs to the eukaryotic ribosomal protein eL40 family.

This chain is Large ribosomal subunit protein eL40, found in Halorubrum lacusprofundi (strain ATCC 49239 / DSM 5036 / JCM 8891 / ACAM 34).